A 484-amino-acid polypeptide reads, in one-letter code: UDP-N-acetylmuramoyl-L-alanyl-D-glutamate--L-lysine ligase (484 aa).

Serine 43 provides a ligand contact to UDP-N-acetyl-alpha-D-muramoyl-L-alanyl-D-glutamate. ATP is bound at residue 119–125; it reads GTKGKTT. UDP-N-acetyl-alpha-D-muramoyl-L-alanyl-D-glutamate is bound by residues 161–162, serine 188, and arginine 196; that span reads TT. At lysine 230 the chain carries N6-carboxylysine. The L-lysine recognition motif signature appears at 405-408; that stretch reads DDPN.

It belongs to the MurCDEF family. MurE subfamily. Carboxylation is probably crucial for Mg(2+) binding and, consequently, for the gamma-phosphate positioning of ATP.

Its subcellular location is the cytoplasm. It catalyses the reaction UDP-N-acetyl-alpha-D-muramoyl-L-alanyl-D-glutamate + L-lysine + ATP = UDP-N-acetyl-alpha-D-muramoyl-L-alanyl-gamma-D-glutamyl-L-lysine + ADP + phosphate + H(+). It participates in cell wall biogenesis; peptidoglycan biosynthesis. Catalyzes the addition of L-lysine to the nucleotide precursor UDP-N-acetylmuramoyl-L-alanyl-D-glutamate (UMAG) in the biosynthesis of bacterial cell-wall peptidoglycan. The chain is UDP-N-acetylmuramoyl-L-alanyl-D-glutamate--L-lysine ligase from Streptococcus agalactiae serotype Ia (strain ATCC 27591 / A909 / CDC SS700).